The sequence spans 373 residues: Thyroid hormone receptor beta-A (373 aa).

Residues 1-18 form a modulating region; the sequence is MPSSMSGYIPSYLDKDEL. 2 consecutive NR C4-type zinc fingers follow at residues 19–39 and 57–81; these read CVVC…CEGC and CKYE…FKKC. A DNA-binding region (nuclear receptor) is located at residues 19–93; sequence CVVCGDKATG…VGMATDLVLD (75 aa). The region spanning 129-373 is the NR LBD domain; that stretch reads EEWELIQVVT…PPLFLEVFED (245 aa).

This sequence belongs to the nuclear hormone receptor family. NR1 subfamily.

It is found in the nucleus. Its function is as follows. High affinity receptor for triiodothyronine (T3). The protein is Thyroid hormone receptor beta-A (thrb-a) of Xenopus laevis (African clawed frog).